Here is a 136-residue protein sequence, read N- to C-terminus: Small ribosomal subunit protein uS11c (136 aa).

It belongs to the universal ribosomal protein uS11 family. As to quaternary structure, part of the 30S ribosomal subunit.

The protein resides in the plastid. The protein localises to the chloroplast. The chain is Small ribosomal subunit protein uS11c from Helianthus annuus (Common sunflower).